A 384-amino-acid chain; its full sequence is Succinyl-diaminopimelate desuccinylase (384 aa).

A Zn(2+)-binding site is contributed by His71. The active site involves Asp73. Asp104 provides a ligand contact to Zn(2+). The Proton acceptor role is filled by Glu139. Zn(2+) is bound by residues Glu140, Glu168, and His357.

The protein belongs to the peptidase M20A family. DapE subfamily. In terms of assembly, homodimer. The cofactor is Zn(2+). It depends on Co(2+) as a cofactor.

The enzyme catalyses N-succinyl-(2S,6S)-2,6-diaminopimelate + H2O = (2S,6S)-2,6-diaminopimelate + succinate. It participates in amino-acid biosynthesis; L-lysine biosynthesis via DAP pathway; LL-2,6-diaminopimelate from (S)-tetrahydrodipicolinate (succinylase route): step 3/3. In terms of biological role, catalyzes the hydrolysis of N-succinyl-L,L-diaminopimelic acid (SDAP), forming succinate and LL-2,6-diaminopimelate (DAP), an intermediate involved in the bacterial biosynthesis of lysine and meso-diaminopimelic acid, an essential component of bacterial cell walls. The sequence is that of Succinyl-diaminopimelate desuccinylase from Bradyrhizobium sp. (strain BTAi1 / ATCC BAA-1182).